A 187-amino-acid polypeptide reads, in one-letter code: Cell division protein SepF (187 aa).

The disordered stretch occupies residues 13–74 (GLAEDDRYAE…PAPATTAQVT (62 aa)). Over residues 16–65 (EDDRYAEDTEPETTRPRVEAAREVRVESRHEARPEVRHEPRPEVSVERRP) the composition is skewed to basic and acidic residues.

It belongs to the SepF family. As to quaternary structure, homodimer. Interacts with FtsZ.

It localises to the cytoplasm. Cell division protein that is part of the divisome complex and is recruited early to the Z-ring. Probably stimulates Z-ring formation, perhaps through the cross-linking of FtsZ protofilaments. Its function overlaps with FtsA. The chain is Cell division protein SepF from Kineococcus radiotolerans (strain ATCC BAA-149 / DSM 14245 / SRS30216).